Reading from the N-terminus, the 157-residue chain is Crossover junction endodeoxyribonuclease RuvC (157 aa).

Catalysis depends on residues Asp-7, Glu-67, and Asp-139. The Mg(2+) site is built by Asp-7, Glu-67, and Asp-139.

Belongs to the RuvC family. In terms of assembly, homodimer which binds Holliday junction (HJ) DNA. The HJ becomes 2-fold symmetrical on binding to RuvC with unstacked arms; it has a different conformation from HJ DNA in complex with RuvA. In the full resolvosome a probable DNA-RuvA(4)-RuvB(12)-RuvC(2) complex forms which resolves the HJ. Mg(2+) is required as a cofactor.

The protein resides in the cytoplasm. It catalyses the reaction Endonucleolytic cleavage at a junction such as a reciprocal single-stranded crossover between two homologous DNA duplexes (Holliday junction).. The RuvA-RuvB-RuvC complex processes Holliday junction (HJ) DNA during genetic recombination and DNA repair. Endonuclease that resolves HJ intermediates. Cleaves cruciform DNA by making single-stranded nicks across the HJ at symmetrical positions within the homologous arms, yielding a 5'-phosphate and a 3'-hydroxyl group; requires a central core of homology in the junction. The consensus cleavage sequence is 5'-(A/T)TT(C/G)-3'. Cleavage occurs on the 3'-side of the TT dinucleotide at the point of strand exchange. HJ branch migration catalyzed by RuvA-RuvB allows RuvC to scan DNA until it finds its consensus sequence, where it cleaves and resolves the cruciform DNA. This chain is Crossover junction endodeoxyribonuclease RuvC, found in Prochlorococcus marinus subsp. pastoris (strain CCMP1986 / NIES-2087 / MED4).